A 921-amino-acid chain; its full sequence is Isoleucine--tRNA ligase (921 aa).

The 'HIGH' region signature appears at 57–67 (PYANGDIHMGH). Glu-552 is a binding site for L-isoleucyl-5'-AMP. A 'KMSKS' region motif is present at residues 593-597 (KMSKS). Lys-596 provides a ligand contact to ATP. 4 residues coordinate Zn(2+): Cys-887, Cys-890, Cys-907, and Cys-910.

The protein belongs to the class-I aminoacyl-tRNA synthetase family. IleS type 1 subfamily. Monomer. The cofactor is Zn(2+).

The protein resides in the cytoplasm. It catalyses the reaction tRNA(Ile) + L-isoleucine + ATP = L-isoleucyl-tRNA(Ile) + AMP + diphosphate. Its function is as follows. Catalyzes the attachment of isoleucine to tRNA(Ile). As IleRS can inadvertently accommodate and process structurally similar amino acids such as valine, to avoid such errors it has two additional distinct tRNA(Ile)-dependent editing activities. One activity is designated as 'pretransfer' editing and involves the hydrolysis of activated Val-AMP. The other activity is designated 'posttransfer' editing and involves deacylation of mischarged Val-tRNA(Ile). The protein is Isoleucine--tRNA ligase of Halalkalibacterium halodurans (strain ATCC BAA-125 / DSM 18197 / FERM 7344 / JCM 9153 / C-125) (Bacillus halodurans).